The chain runs to 616 residues: Chaperone protein HscA homolog (616 aa).

The protein belongs to the heat shock protein 70 family.

Functionally, chaperone involved in the maturation of iron-sulfur cluster-containing proteins. Has a low intrinsic ATPase activity which is markedly stimulated by HscB. The polypeptide is Chaperone protein HscA homolog (Aliivibrio fischeri (strain MJ11) (Vibrio fischeri)).